The chain runs to 91 residues: Long neurotoxin LNTX28 (91 aa).

The N-terminal stretch at Met1–Thr21 is a signal peptide. Disulfide bonds link Cys24–Cys41, Cys34–Cys62, Cys47–Cys51, Cys66–Cys77, and Cys78–Cys83.

This sequence belongs to the three-finger toxin family. Long-chain subfamily. Type II alpha-neurotoxin sub-subfamily. Expressed by the venom gland.

It is found in the secreted. Binds with high affinity to muscular (alpha-1/CHRNA1) and neuronal (alpha-7/CHRNA7) nicotinic acetylcholine receptor (nAChR) and inhibits acetylcholine from binding to the receptor, thereby impairing neuromuscular and neuronal transmission. This chain is Long neurotoxin LNTX28, found in Ophiophagus hannah (King cobra).